The sequence spans 107 residues: MVVRVFVASCSGFVAIKKKQQDVVRFLEANKIEFEEVDITMSEEQRQWMYKNIPPEKKPAQGNPLPPQIFNGDRYCGDYDSFFESKESNTVFSFLGLKPRPASTAEP.

The SH3-binding signature appears at Gln61–Pro67.

This sequence belongs to the SH3BGR family.

The protein resides in the nucleus. The polypeptide is SH3 domain-binding glutamic acid-rich-like protein 2 (Sh3bgrl2) (Mus musculus (Mouse)).